A 132-amino-acid polypeptide reads, in one-letter code: Telomere bouquet protein 1 (132 aa).

Interacts with bqt2 and sad1. The bqt1-bqt2-sad1 complex binds rap1.

Its subcellular location is the cytoplasm. It localises to the cytoskeleton. The protein localises to the microtubule organizing center. The protein resides in the spindle pole body. It is found in the chromosome. Its subcellular location is the telomere. Its function is as follows. Involved in chromosome segregation. During meiotic prophase, connects telomeres to the spindle pole body by forming a bridge between the telomere protein rap1 and the spindle pole body protein sad1. This is Telomere bouquet protein 1 (bqt1) from Schizosaccharomyces pombe (strain 972 / ATCC 24843) (Fission yeast).